Here is a 347-residue protein sequence, read N- to C-terminus: Aspartate-semialdehyde dehydrogenase (347 aa).

NADP(+) contacts are provided by residues 10 to 13 (TGMV) and 37 to 38 (RS). A phosphate-binding site is contributed by arginine 108. Cysteine 147 (acyl-thioester intermediate) is an active-site residue. Glutamine 174 lines the substrate pocket. NADP(+) is bound at residue 177–178 (SG). Position 200 (glutamate 200) interacts with substrate. Lysine 203 is a phosphate binding site. Substrate is bound at residue arginine 233. The Proton acceptor role is filled by histidine 240. The disordered stretch occupies residues 276-299 (APEKPVVVRDEENRPQPRMDRDMD). The segment covering 281–299 (VVVRDEENRPQPRMDRDMD) has biased composition (basic and acidic residues). 327–328 (NT) contacts NADP(+).

Belongs to the aspartate-semialdehyde dehydrogenase family. Homodimer.

It carries out the reaction L-aspartate 4-semialdehyde + phosphate + NADP(+) = 4-phospho-L-aspartate + NADPH + H(+). Its pathway is amino-acid biosynthesis; L-lysine biosynthesis via DAP pathway; (S)-tetrahydrodipicolinate from L-aspartate: step 2/4. The protein operates within amino-acid biosynthesis; L-methionine biosynthesis via de novo pathway; L-homoserine from L-aspartate: step 2/3. It participates in amino-acid biosynthesis; L-threonine biosynthesis; L-threonine from L-aspartate: step 2/5. Functionally, catalyzes the NADPH-dependent formation of L-aspartate-semialdehyde (L-ASA) by the reductive dephosphorylation of L-aspartyl-4-phosphate. The protein is Aspartate-semialdehyde dehydrogenase of Methanothermobacter thermautotrophicus (strain ATCC 29096 / DSM 1053 / JCM 10044 / NBRC 100330 / Delta H) (Methanobacterium thermoautotrophicum).